The primary structure comprises 62 residues: Photosystem II reaction center protein Z (62 aa).

The next 2 membrane-spanning stretches (helical) occupy residues 8-28 and 41-61; these read AVFA…VVFA and FSGT…NSLI.

This sequence belongs to the PsbZ family. As to quaternary structure, PSII is composed of 1 copy each of membrane proteins PsbA, PsbB, PsbC, PsbD, PsbE, PsbF, PsbH, PsbI, PsbJ, PsbK, PsbL, PsbM, PsbT, PsbY, PsbZ, Psb30/Ycf12, at least 3 peripheral proteins of the oxygen-evolving complex and a large number of cofactors. It forms dimeric complexes.

It localises to the plastid. Its subcellular location is the chloroplast thylakoid membrane. May control the interaction of photosystem II (PSII) cores with the light-harvesting antenna, regulates electron flow through the 2 photosystem reaction centers. PSII is a light-driven water plastoquinone oxidoreductase, using light energy to abstract electrons from H(2)O, generating a proton gradient subsequently used for ATP formation. The polypeptide is Photosystem II reaction center protein Z (Pisum sativum (Garden pea)).